The primary structure comprises 278 residues: Aliphatic sulfonates import ATP-binding protein SsuB (278 aa).

An ABC transporter domain is found at 15–236; it reads LVLRDLSKRF…SQGDAAFAAL (222 aa). An ATP-binding site is contributed by 47–54; that stretch reads GRSGCGKS. Residues 251-264 are compositionally biased toward basic and acidic residues; sequence PERESFTHPNDGEP. Positions 251–278 are disordered; it reads PERESFTHPNDGEPRWPGVPAHGVRWAV.

Belongs to the ABC transporter superfamily. Aliphatic sulfonates importer (TC 3.A.1.17.2) family. As to quaternary structure, the complex is composed of two ATP-binding proteins (SsuB), two transmembrane proteins (SsuC) and a solute-binding protein (SsuA).

It localises to the cell inner membrane. It carries out the reaction ATP + H2O + aliphatic sulfonate-[sulfonate-binding protein]Side 1 = ADP + phosphate + aliphatic sulfonateSide 2 + [sulfonate-binding protein]Side 1.. Part of the ABC transporter complex SsuABC involved in aliphatic sulfonates import. Responsible for energy coupling to the transport system. The protein is Aliphatic sulfonates import ATP-binding protein SsuB of Albidiferax ferrireducens (strain ATCC BAA-621 / DSM 15236 / T118) (Rhodoferax ferrireducens).